A 326-amino-acid chain; its full sequence is o-succinylbenzoate synthase (326 aa).

Lys-110 serves as the catalytic Proton donor. 3 residues coordinate Mg(2+): Asp-138, Glu-165, and Asp-188. Lys-212 (proton acceptor) is an active-site residue.

The protein belongs to the mandelate racemase/muconate lactonizing enzyme family. MenC type 1 subfamily. Requires a divalent metal cation as cofactor.

The catalysed reaction is (1R,6R)-6-hydroxy-2-succinyl-cyclohexa-2,4-diene-1-carboxylate = 2-succinylbenzoate + H2O. It functions in the pathway quinol/quinone metabolism; 1,4-dihydroxy-2-naphthoate biosynthesis; 1,4-dihydroxy-2-naphthoate from chorismate: step 4/7. Its pathway is quinol/quinone metabolism; menaquinone biosynthesis. Its function is as follows. Converts 2-succinyl-6-hydroxy-2,4-cyclohexadiene-1-carboxylate (SHCHC) to 2-succinylbenzoate (OSB). This Mycobacterium bovis (strain ATCC BAA-935 / AF2122/97) protein is o-succinylbenzoate synthase.